A 271-amino-acid chain; its full sequence is MDTSMNFSRGLKMDLMQPYDFETFQDLRPFLEEYWVSSFLIVVVYLLLIVVGQTYMRTRKSFSLQRPLILWSFFLAIFSILGTLRMWKFMATVMFTVGLKQTVCFAIYTDDAVVRFWSFLFLLSKVVELGDTAFIILRKRPLIFVHWYHHSTVLLFTSFGYKNKVPSGGWFMTMNFGVHSVMYTYYTMKAAKLKHPNLLPMVITSLQILQMVLGTIFGILNYIWRQEKGCHTTTEHFFWSFMLYGTYFILFAHFFHRAYLRPKGKVASKSQ.

Asn6 is a glycosylation site (N-linked (GlcNAc...) asparagine). 7 helical membrane-spanning segments follow: residues 30–50 (FLEE…LLIV), 67–87 (PLIL…LRMW), 116–136 (FWSF…AFII), 141–161 (PLIF…SFGY), 165–187 (VPSG…TYYT), 199–219 (LPMV…IFGI), and 236–256 (HFFW…HFFH).

This sequence belongs to the ELO family. ELOVL3 subfamily. Interacts with TECR. In terms of processing, N-Glycosylated. Expressed in brown adipose tissue and liver. In the skin, strong expressed in the cells of the inner layer of the outer root sheath of the hair follicles and in the sebocytes of the sebaceous glands. Hardly detectable in the epidermis and not at all in fibroblasts.

It localises to the endoplasmic reticulum membrane. It catalyses the reaction a very-long-chain acyl-CoA + malonyl-CoA + H(+) = a very-long-chain 3-oxoacyl-CoA + CO2 + CoA. It carries out the reaction eicosanoyl-CoA + malonyl-CoA + H(+) = 3-oxodocosanoyl-CoA + CO2 + CoA. The enzyme catalyses hexadecanoyl-CoA + malonyl-CoA + H(+) = 3-oxooctadecanoyl-CoA + CO2 + CoA. The catalysed reaction is octadecanoyl-CoA + malonyl-CoA + H(+) = 3-oxoeicosanoyl-CoA + CO2 + CoA. It catalyses the reaction (9Z)-octadecenoyl-CoA + malonyl-CoA + H(+) = 3-oxo-(11Z)-eicosenoyl-CoA + CO2 + CoA. It carries out the reaction (9Z,12Z)-octadecadienoyl-CoA + malonyl-CoA + H(+) = (11Z,14Z)-3-oxoicosa-11,14-dienoyl-CoA + CO2 + CoA. The enzyme catalyses (9Z,12Z,15Z)-octadecatrienoyl-CoA + malonyl-CoA + H(+) = (11Z,14Z,17Z)-3-oxoeicosatrienoyl-CoA + CO2 + CoA. The catalysed reaction is docosanoyl-CoA + malonyl-CoA + H(+) = 3-oxotetracosanoyl-CoA + CO2 + CoA. It catalyses the reaction tetradecanoyl-CoA + malonyl-CoA + H(+) = 3-oxohexadecanoyl-CoA + CO2 + CoA. The protein operates within lipid metabolism; polyunsaturated fatty acid biosynthesis. Functionally, catalyzes the first and rate-limiting reaction of the four reactions that constitute the long-chain fatty acids elongation cycle. This endoplasmic reticulum-bound enzymatic process allows the addition of 2 carbons to the chain of long- and very long-chain fatty acids (VLCFAs) per cycle. Condensing enzyme that exhibits activity toward saturated and unsaturated acyl-CoA substrates with higher activity toward C18 acyl-CoAs, especially C18:0 acyl-CoAs. May participate in the production of saturated and monounsaturated VLCFAs of different chain lengths that are involved in multiple biological processes as precursors of membrane lipids and lipid mediators. Participates in the formation of certain VLCFA and triglycerides in certain cells of the hair follicles and the sebaceous glands, required for skin barrier function. Critical enzyme for lipid accumulation and metabolic activity in brown adipocytes during the early phase of the tissue recruitment. Plays a role in lipid storage and in resistance to diet-induced obesity. The sequence is that of Very long chain fatty acid elongase 3 from Mus musculus (Mouse).